A 325-amino-acid polypeptide reads, in one-letter code: Anthranilate phosphoribosyltransferase (325 aa).

5-phospho-alpha-D-ribose 1-diphosphate is bound by residues G74, 77–78, T82, 84–87, 101–109, and S113; these read GD, NVST, and KHGNVSITS. Anthranilate is bound at residue G74. S86 provides a ligand contact to Mg(2+). N104 lines the anthranilate pocket. Anthranilate is bound at residue R159. Mg(2+) contacts are provided by D217 and E218.

This sequence belongs to the anthranilate phosphoribosyltransferase family. As to quaternary structure, homodimer. The cofactor is Mg(2+).

It catalyses the reaction N-(5-phospho-beta-D-ribosyl)anthranilate + diphosphate = 5-phospho-alpha-D-ribose 1-diphosphate + anthranilate. It participates in amino-acid biosynthesis; L-tryptophan biosynthesis; L-tryptophan from chorismate: step 2/5. In terms of biological role, catalyzes the transfer of the phosphoribosyl group of 5-phosphorylribose-1-pyrophosphate (PRPP) to anthranilate to yield N-(5'-phosphoribosyl)-anthranilate (PRA). The sequence is that of Anthranilate phosphoribosyltransferase from Thermococcus kodakarensis (strain ATCC BAA-918 / JCM 12380 / KOD1) (Pyrococcus kodakaraensis (strain KOD1)).